The sequence spans 552 residues: Probable protein kinase UbiB (552 aa).

Positions histidine 121–alanine 504 constitute a Protein kinase domain. Residues leucine 127–valine 135 and lysine 149 each bind ATP. Aspartate 284 functions as the Proton acceptor in the catalytic mechanism. A run of 2 helical transmembrane segments spans residues valine 501–histidine 521 and isoleucine 530–tryptophan 550.

This sequence belongs to the ABC1 family. UbiB subfamily.

The protein localises to the cell inner membrane. The protein operates within cofactor biosynthesis; ubiquinone biosynthesis [regulation]. Its function is as follows. Is probably a protein kinase regulator of UbiI activity which is involved in aerobic coenzyme Q (ubiquinone) biosynthesis. The polypeptide is Probable protein kinase UbiB (Xylella fastidiosa (strain M23)).